The sequence spans 389 residues: Flavin-dependent monooxygenase (389 aa).

Residues 12 to 15 (AGVA), 34 to 35 (EK), Q44, R105, Y267, and D289 contribute to the FAD site.

Belongs to the aromatic-ring hydroxylase family. FAD serves as cofactor.

It catalyses the reaction a tetracycline + NADPH + O2 + H(+) = a (1S,10aS)-3-(CONH2)-1-(Me2N)-3,3a,4,6-(HO)4-2,5-dioxo-1H,10aH,11H,11aH-cyclopenta[b]anthracene + CO + NADP(+) + H2O. The catalysed reaction is 7-chlorotetracycline + NADPH + O2 + H(+) = (1S,10S,10aS)-3-(CONH2)-9-Cl-1-(Me2N)-3,3a,4,10-(HO)4-10-Me-2,5-dioxo-1H,10aH,11H,11aH-cyclopenta[b]anthracen-6-olate + CO + NADP(+) + H2O. With respect to regulation, inhibited by anhydrotetracycline. Its function is as follows. An FAD-requiring monooxygenase active on tetracycline antibiotic and some of its derivatives, which leads to their inactivation. Expression in E.coli confers high resistance to tetracycline and oxytetracycline, does not confer resistance to minocycline or tigecycline. The reaction requires NADPH. Expression in L.pneumophila confers resistance to tetracycline. Degrades and confers resistance to tetracycline and chlortetracycline. The protein is Flavin-dependent monooxygenase (tet(56)) of Legionella longbeachae serogroup 1 (strain NSW150).